We begin with the raw amino-acid sequence, 563 residues long: NAD-dependent malic enzyme (563 aa).

Catalysis depends on Y101, which acts as the Proton donor. R154 is a binding site for NAD(+). K172 functions as the Proton acceptor in the catalytic mechanism. A divalent metal cation contacts are provided by E243, D244, and D267. The NAD(+) site is built by D267 and N416.

Belongs to the malic enzymes family. As to quaternary structure, homotetramer. Mg(2+) is required as a cofactor. Mn(2+) serves as cofactor.

The enzyme catalyses (S)-malate + NAD(+) = pyruvate + CO2 + NADH. The catalysed reaction is oxaloacetate + H(+) = pyruvate + CO2. This Pseudomonas savastanoi pv. phaseolicola (strain 1448A / Race 6) (Pseudomonas syringae pv. phaseolicola (strain 1448A / Race 6)) protein is NAD-dependent malic enzyme.